Here is a 300-residue protein sequence, read N- to C-terminus: MKTNKIVFIFGPTAVGKSDILFHFPKGVAEVISVDSIQVYKEFDIASCKPSIELRSHIRHHLVDFLEPIYEYNLGIFYKESCKIIESLREQKKIPIFVGGSAFYFKHLKYGLPSAPPVSEKVRLYINNLFIKMGKDYLLEELRRVDFKRYESINQNDIYRIKRSLEVYYQTGIPISQFLQRENMFENIVAIGLRRPMDEMKSRIISRVKNMIDCGLLDEIKSLLGKGYDEKTPAFKGIGYREFLLWRSRPCYLLNDIINLIVKNSFLYVKRQMTFFNKLPNVLWFHPDDDLKNILDLIFV.

11-18 (GPTAVGKS) serves as a coordination point for ATP. 13 to 18 (TAVGKS) serves as a coordination point for substrate. The interaction with substrate tRNA stretch occupies residues 35-38 (DSIQ).

This sequence belongs to the IPP transferase family. Monomer. Requires Mg(2+) as cofactor.

The enzyme catalyses adenosine(37) in tRNA + dimethylallyl diphosphate = N(6)-dimethylallyladenosine(37) in tRNA + diphosphate. In terms of biological role, catalyzes the transfer of a dimethylallyl group onto the adenine at position 37 in tRNAs that read codons beginning with uridine, leading to the formation of N6-(dimethylallyl)adenosine (i(6)A). The sequence is that of tRNA dimethylallyltransferase from Borrelia duttonii (strain Ly).